We begin with the raw amino-acid sequence, 207 residues long: Holliday junction branch migration complex subunit RuvA (207 aa).

Positions 1–63 (MISSLRGTVL…EDSLQLFGFS (63 aa)) are domain I. The interval 64–142 (GLEQLQVFEL…ACRRPSAPSA (79 aa)) is domain II. The interval 142–146 (ARRPS) is flexible linker. Residues 147–207 (APSSVSDSVL…RLGPANQAAR (61 aa)) are domain III.

This sequence belongs to the RuvA family. In terms of assembly, homotetramer. Forms an RuvA(8)-RuvB(12)-Holliday junction (HJ) complex. HJ DNA is sandwiched between 2 RuvA tetramers; dsDNA enters through RuvA and exits via RuvB. An RuvB hexamer assembles on each DNA strand where it exits the tetramer. Each RuvB hexamer is contacted by two RuvA subunits (via domain III) on 2 adjacent RuvB subunits; this complex drives branch migration. In the full resolvosome a probable DNA-RuvA(4)-RuvB(12)-RuvC(2) complex forms which resolves the HJ.

The protein localises to the cytoplasm. Its function is as follows. The RuvA-RuvB-RuvC complex processes Holliday junction (HJ) DNA during genetic recombination and DNA repair, while the RuvA-RuvB complex plays an important role in the rescue of blocked DNA replication forks via replication fork reversal (RFR). RuvA specifically binds to HJ cruciform DNA, conferring on it an open structure. The RuvB hexamer acts as an ATP-dependent pump, pulling dsDNA into and through the RuvAB complex. HJ branch migration allows RuvC to scan DNA until it finds its consensus sequence, where it cleaves and resolves the cruciform DNA. In Leifsonia xyli subsp. xyli (strain CTCB07), this protein is Holliday junction branch migration complex subunit RuvA.